The chain runs to 357 residues: GTPase Obg (357 aa).

The Obg domain maps to 1 to 158 (MFVDNIKLKV…LEIVLELKLI (158 aa)). The region spanning 159 to 345 (ADVGLVGFPN…LKFALFDLVE (187 aa)) is the OBG-type G domain. GTP-binding positions include 165 to 172 (GFPNAGKS), 190 to 194 (FTTLT), 212 to 215 (DIPG), 280 to 283 (TKCD), and 326 to 328 (SSV). Residues serine 172 and threonine 192 each contribute to the Mg(2+) site.

This sequence belongs to the TRAFAC class OBG-HflX-like GTPase superfamily. OBG GTPase family. Monomer. The cofactor is Mg(2+).

It is found in the cytoplasm. Its function is as follows. An essential GTPase which binds GTP, GDP and possibly (p)ppGpp with moderate affinity, with high nucleotide exchange rates and a fairly low GTP hydrolysis rate. Plays a role in control of the cell cycle, stress response, ribosome biogenesis and in those bacteria that undergo differentiation, in morphogenesis control. This is GTPase Obg from Nautilia profundicola (strain ATCC BAA-1463 / DSM 18972 / AmH).